Reading from the N-terminus, the 1071-residue chain is V-type proton ATPase catalytic subunit A (1071 aa).

Residue A2 is modified to N-acetylalanine. T131 is modified (phosphothreonine). 257–264 (GAFGCGKT) lines the ATP pocket. The region spanning 494-642 (LLGLWIGDGL…LVSLARSLGL (149 aa)) is the DOD-type homing endonuclease domain. 2 positions are modified to phosphoserine: S858 and S928.

This sequence belongs to the ATPase alpha/beta chains family. In terms of assembly, V-ATPase is a heteromultimeric enzyme composed of a peripheral catalytic V1 complex (components A to H) attached to an integral membrane V0 proton pore complex (components: a, c, c', c'', d, e, f and VOA1). Interacts with RAV1 and RAV2 components of the RAVE complex, which are essential for the stability and assembly of V-ATPase. This protein undergoes a protein self splicing that involves a post-translational excision of the VDE intervening region (intein) followed by peptide ligation.

Its subcellular location is the vacuole membrane. The enzyme catalyses ATP + H2O + 4 H(+)(in) = ADP + phosphate + 5 H(+)(out). In terms of biological role, catalytic subunit of the V1 complex of vacuolar(H+)-ATPase (V-ATPase), a multisubunit enzyme composed of a peripheral complex (V1) that hydrolyzes ATP and a membrane integral complex (V0) that translocates protons. V-ATPase is responsible for acidifying and maintaining the pH of intracellular compartments. Its function is as follows. PI-SceI is an endonuclease that can cleave at a site present in a VMA1 allele that lacks the derived endonuclease segment of the open reading frame; cleavage at this site only occurs during meiosis and initiates 'homing', a genetic event that converts a VMA1 allele lacking VDE into one that contains it. This is V-type proton ATPase catalytic subunit A from Saccharomyces cerevisiae (strain ATCC 204508 / S288c) (Baker's yeast).